The sequence spans 1407 residues: DNA-directed RNA polymerase subunit beta' (1407 aa).

Zn(2+)-binding residues include Cys-70, Cys-72, Cys-85, and Cys-88. Mg(2+) is bound by residues Asp-460, Asp-462, and Asp-464. The Zn(2+) site is built by Cys-814, Cys-888, Cys-895, and Cys-898.

This sequence belongs to the RNA polymerase beta' chain family. The RNAP catalytic core consists of 2 alpha, 1 beta, 1 beta' and 1 omega subunit. When a sigma factor is associated with the core the holoenzyme is formed, which can initiate transcription. It depends on Mg(2+) as a cofactor. The cofactor is Zn(2+).

The enzyme catalyses RNA(n) + a ribonucleoside 5'-triphosphate = RNA(n+1) + diphosphate. In terms of biological role, DNA-dependent RNA polymerase catalyzes the transcription of DNA into RNA using the four ribonucleoside triphosphates as substrates. This chain is DNA-directed RNA polymerase subunit beta', found in Salmonella paratyphi B (strain ATCC BAA-1250 / SPB7).